Here is a 696-residue protein sequence, read N- to C-terminus: UvrABC system protein B (696 aa).

The 388-residue stretch at 46 to 433 (EGVEDGLSFQ…SGQTAEQVVR (388 aa)) folds into the Helicase ATP-binding domain. An ATP-binding site is contributed by 59-66 (GVTGSGKT). The short motif at 112–135 (YYDYYQPEAYVPQRDLFIEKDSSI) is the Beta-hairpin element. The 167-residue stretch at 450-616 (QVDDVLSEIT…GVVKRIKDII (167 aa)) folds into the Helicase C-terminal domain. Residues 647–682 (AKEIKRLEKQMADYAKNLEFEKAAQTRDQLALLRER) enclose the UVR domain.

Belongs to the UvrB family. Forms a heterotetramer with UvrA during the search for lesions. Interacts with UvrC in an incision complex.

Its subcellular location is the cytoplasm. In terms of biological role, the UvrABC repair system catalyzes the recognition and processing of DNA lesions. A damage recognition complex composed of 2 UvrA and 2 UvrB subunits scans DNA for abnormalities. Upon binding of the UvrA(2)B(2) complex to a putative damaged site, the DNA wraps around one UvrB monomer. DNA wrap is dependent on ATP binding by UvrB and probably causes local melting of the DNA helix, facilitating insertion of UvrB beta-hairpin between the DNA strands. Then UvrB probes one DNA strand for the presence of a lesion. If a lesion is found the UvrA subunits dissociate and the UvrB-DNA preincision complex is formed. This complex is subsequently bound by UvrC and the second UvrB is released. If no lesion is found, the DNA wraps around the other UvrB subunit that will check the other stand for damage. The chain is UvrABC system protein B from Burkholderia mallei (strain ATCC 23344).